The following is a 313-amino-acid chain: Acetyl-coenzyme A carboxylase carboxyl transferase subunit alpha (313 aa).

In terms of domain architecture, CoA carboxyltransferase C-terminal spans 36-286; it reads RLDKEVKTIY…KEYFLDTLRT (251 aa).

This sequence belongs to the AccA family. Acetyl-CoA carboxylase is a heterohexamer composed of biotin carboxyl carrier protein (AccB), biotin carboxylase (AccC) and two subunits each of ACCase subunit alpha (AccA) and ACCase subunit beta (AccD).

The protein localises to the cytoplasm. The enzyme catalyses N(6)-carboxybiotinyl-L-lysyl-[protein] + acetyl-CoA = N(6)-biotinyl-L-lysyl-[protein] + malonyl-CoA. The protein operates within lipid metabolism; malonyl-CoA biosynthesis; malonyl-CoA from acetyl-CoA: step 1/1. Component of the acetyl coenzyme A carboxylase (ACC) complex. First, biotin carboxylase catalyzes the carboxylation of biotin on its carrier protein (BCCP) and then the CO(2) group is transferred by the carboxyltransferase to acetyl-CoA to form malonyl-CoA. This chain is Acetyl-coenzyme A carboxylase carboxyl transferase subunit alpha, found in Helicobacter acinonychis (strain Sheeba).